The primary structure comprises 416 residues: Coenzyme F420H(2) oxidase (416 aa).

Residues histidine 87, glutamate 89, aspartate 91, histidine 92, histidine 155, aspartate 174, and histidine 239 each coordinate Fe cation. In terms of domain architecture, Flavodoxin-like spans 266–407 (AVIVYDTMHY…NCYNMGKELA (142 aa)). Residues 272-277 (TMHYST), 324-327 (TIYD), and 359-364 (SMGGEG) each bind FMN.

It in the N-terminal section; belongs to the zinc metallo-hydrolase group 3 family. FMN is required as a cofactor. Fe cation serves as cofactor.

It catalyses the reaction 2 reduced coenzyme F420-(gamma-L-Glu)(n) + O2 = 2 oxidized coenzyme F420-(gamma-L-Glu)(n) + 2 H2O + 2 H(+). Functionally, catalyzes the oxidation of F420H(2) with O(2). May be involved in O(2) detoxification, reducing the intracellular O(2) concentration to a level allowing growth at the expense of methane formation. The sequence is that of Coenzyme F420H(2) oxidase (fprA) from Methanocaldococcus jannaschii (strain ATCC 43067 / DSM 2661 / JAL-1 / JCM 10045 / NBRC 100440) (Methanococcus jannaschii).